The following is a 274-amino-acid chain: Large ribosomal subunit protein uL2 (274 aa).

The disordered stretch occupies residues 224–259; that stretch reads AMNPVDHPHGGGEGRTSGGRHPVTPWGIPTKGYKTR.

The protein belongs to the universal ribosomal protein uL2 family. As to quaternary structure, part of the 50S ribosomal subunit. Forms a bridge to the 30S subunit in the 70S ribosome.

In terms of biological role, one of the primary rRNA binding proteins. Required for association of the 30S and 50S subunits to form the 70S ribosome, for tRNA binding and peptide bond formation. It has been suggested to have peptidyltransferase activity; this is somewhat controversial. Makes several contacts with the 16S rRNA in the 70S ribosome. This chain is Large ribosomal subunit protein uL2, found in Geobacter sp. (strain M21).